We begin with the raw amino-acid sequence, 110 residues long: Large ribosomal subunit protein uL22 (110 aa).

The protein belongs to the universal ribosomal protein uL22 family. In terms of assembly, part of the 50S ribosomal subunit.

In terms of biological role, this protein binds specifically to 23S rRNA; its binding is stimulated by other ribosomal proteins, e.g. L4, L17, and L20. It is important during the early stages of 50S assembly. It makes multiple contacts with different domains of the 23S rRNA in the assembled 50S subunit and ribosome. Its function is as follows. The globular domain of the protein is located near the polypeptide exit tunnel on the outside of the subunit, while an extended beta-hairpin is found that lines the wall of the exit tunnel in the center of the 70S ribosome. The protein is Large ribosomal subunit protein uL22 of Hahella chejuensis (strain KCTC 2396).